A 642-amino-acid chain; its full sequence is Threonine--tRNA ligase (642 aa).

Positions 1 to 61 constitute a TGS domain; it reads MPVITLPDGS…ETDAELSIIT (61 aa). Residues 243-534 form a catalytic region; sequence DHRKIGKQLD…LIEEYAGRFP (292 aa). 3 residues coordinate Zn(2+): cysteine 334, histidine 385, and histidine 511.

This sequence belongs to the class-II aminoacyl-tRNA synthetase family. In terms of assembly, homodimer. Zn(2+) is required as a cofactor.

It localises to the cytoplasm. The enzyme catalyses tRNA(Thr) + L-threonine + ATP = L-threonyl-tRNA(Thr) + AMP + diphosphate + H(+). Functionally, catalyzes the attachment of threonine to tRNA(Thr) in a two-step reaction: L-threonine is first activated by ATP to form Thr-AMP and then transferred to the acceptor end of tRNA(Thr). Also edits incorrectly charged L-seryl-tRNA(Thr). This chain is Threonine--tRNA ligase, found in Shewanella putrefaciens (strain CN-32 / ATCC BAA-453).